Reading from the N-terminus, the 384-residue chain is Sphingosine 1-phosphate receptor 4 (384 aa).

At 1-50 (MNATGTPVAPESCQQLAAGGHSRLIVLHYNHSGRLAGRGGPEDGGLGALR) the chain is on the extracellular side. Residues Asn-2 and Asn-30 are each glycosylated (N-linked (GlcNAc...) asparagine). Residues 51–71 (GLSVAASCLVVLENLLVLAAI) traverse the membrane as a helical segment. At 72–84 (TSHMRSRRWVYYC) the chain is on the cytoplasmic side. The chain crosses the membrane as a helical span at residues 85–105 (LVNITLSDLLTGAAYLANVLL). Over 106–117 (SGARTFRLAPAQ) the chain is Extracellular. The helical transmembrane segment at 118–138 (WFLREGLLFTALAASTFSLLF) threads the bilayer. The Cytoplasmic segment spans residues 139–161 (TAGERFATMVRPVAESGATKTSR). Residues 162-182 (VYGFIGLCWLLAALLGMLPLL) traverse the membrane as a helical segment. The Extracellular segment spans residues 183–206 (GWNCLCAFDRCSSLLPLYSKRYIL). Residues 207–227 (FCLVIFAGVLATIMGLYGAIF) form a helical membrane-spanning segment. The Cytoplasmic portion of the chain corresponds to 228–252 (RLVQASGQKAPRPAARRKARRLLKT). The chain crosses the membrane as a helical span at residues 253–273 (VLMILLAFLVCWGPLFGLLLA). At 274–288 (DVFGSNLWAQEYLRG) the chain is on the extracellular side. Residues 289-309 (MDWILALAVLNSAVNPIIYSF) traverse the membrane as a helical segment. Topologically, residues 310–384 (RSREVCRAVL…LSSISSVRSI (75 aa)) are cytoplasmic. Cys-323 carries the S-palmitoyl cysteine lipid modification.

This sequence belongs to the G-protein coupled receptor 1 family. As to expression, specifically expressed in fetal and adult lymphoid and hematopoietic tissue as well as in lung. Considerable level of expression in adult and fetal spleen as well as adult peripheral leukocytes and lung. Lower expression in adult thymus, lymph node, bone marrow, and appendix as well as in fetal liver, thymus, and lung.

It is found in the cell membrane. Functionally, receptor for the lysosphingolipid sphingosine 1-phosphate (S1P). S1P is a bioactive lysophospholipid that elicits diverse physiological effect on most types of cells and tissues. May be involved in cell migration processes that are specific for lymphocytes. The polypeptide is Sphingosine 1-phosphate receptor 4 (S1PR4) (Homo sapiens (Human)).